Here is a 90-residue protein sequence, read N- to C-terminus: Photosystem I reaction center subunit PsaK 2 (90 aa).

The next 2 helical transmembrane spans lie at 20-42 and 67-89; these read LSVGIIMCLCNVFAFVIGYFAIQ and LATMSFGHILGAGMVLGLASSGI.

The protein belongs to the PsaG/PsaK family.

It localises to the cellular thylakoid membrane. This chain is Photosystem I reaction center subunit PsaK 2 (psaK2), found in Synechocystis sp. (strain ATCC 27184 / PCC 6803 / Kazusa).